A 458-amino-acid polypeptide reads, in one-letter code: Bifunctional protein GlmU (458 aa).

Residues 1-232 are pyrophosphorylase; that stretch reads MISPLSVIIL…TFEIEGVNNR (232 aa). UDP-N-acetyl-alpha-D-glucosamine-binding positions include 10-13, K24, Q79, 84-85, 106-108, G142, E157, N172, and N230; these read LAAG, GT, and YGD. D108 contacts Mg(2+). N230 contacts Mg(2+). The interval 233–253 is linker; the sequence is QQLASLERTWQGKLVADLQEA. The N-acetyltransferase stretch occupies residues 254 to 458; that stretch reads GVQFADPTRV…KDNFQRPTKK (205 aa). Residues R336 and K354 each contribute to the UDP-N-acetyl-alpha-D-glucosamine site. The active-site Proton acceptor is H366. Positions 369 and 380 each coordinate UDP-N-acetyl-alpha-D-glucosamine. Acetyl-CoA contacts are provided by residues A383, 389 to 390, S408, A426, and R443; that span reads NY.

The protein in the N-terminal section; belongs to the N-acetylglucosamine-1-phosphate uridyltransferase family. It in the C-terminal section; belongs to the transferase hexapeptide repeat family. In terms of assembly, homotrimer. Mg(2+) is required as a cofactor.

It is found in the cytoplasm. It carries out the reaction alpha-D-glucosamine 1-phosphate + acetyl-CoA = N-acetyl-alpha-D-glucosamine 1-phosphate + CoA + H(+). It catalyses the reaction N-acetyl-alpha-D-glucosamine 1-phosphate + UTP + H(+) = UDP-N-acetyl-alpha-D-glucosamine + diphosphate. The protein operates within nucleotide-sugar biosynthesis; UDP-N-acetyl-alpha-D-glucosamine biosynthesis; N-acetyl-alpha-D-glucosamine 1-phosphate from alpha-D-glucosamine 6-phosphate (route II): step 2/2. Its pathway is nucleotide-sugar biosynthesis; UDP-N-acetyl-alpha-D-glucosamine biosynthesis; UDP-N-acetyl-alpha-D-glucosamine from N-acetyl-alpha-D-glucosamine 1-phosphate: step 1/1. It functions in the pathway bacterial outer membrane biogenesis; LPS lipid A biosynthesis. Functionally, catalyzes the last two sequential reactions in the de novo biosynthetic pathway for UDP-N-acetylglucosamine (UDP-GlcNAc). The C-terminal domain catalyzes the transfer of acetyl group from acetyl coenzyme A to glucosamine-1-phosphate (GlcN-1-P) to produce N-acetylglucosamine-1-phosphate (GlcNAc-1-P), which is converted into UDP-GlcNAc by the transfer of uridine 5-monophosphate (from uridine 5-triphosphate), a reaction catalyzed by the N-terminal domain. This Psychrobacter arcticus (strain DSM 17307 / VKM B-2377 / 273-4) protein is Bifunctional protein GlmU.